The following is a 402-amino-acid chain: UDP-N-acetylmuramoylalanine--D-glutamate ligase (402 aa).

An ATP-binding site is contributed by 97–103 (GTNGKTT).

The protein belongs to the MurCDEF family.

The protein localises to the cytoplasm. It catalyses the reaction UDP-N-acetyl-alpha-D-muramoyl-L-alanine + D-glutamate + ATP = UDP-N-acetyl-alpha-D-muramoyl-L-alanyl-D-glutamate + ADP + phosphate + H(+). Its pathway is cell wall biogenesis; peptidoglycan biosynthesis. Functionally, cell wall formation. Catalyzes the addition of glutamate to the nucleotide precursor UDP-N-acetylmuramoyl-L-alanine (UMA). The chain is UDP-N-acetylmuramoylalanine--D-glutamate ligase from Campylobacter jejuni subsp. jejuni serotype O:23/36 (strain 81-176).